The following is a 122-amino-acid chain: ATP-dependent Clp protease adapter protein ClpS (122 aa).

The disordered stretch occupies residues 1–27 (MVRMATKPPSMTPTPPTGAPPRDDGGS). Residues 10 to 19 (SMTPTPPTGA) are compositionally biased toward pro residues.

This sequence belongs to the ClpS family. Binds to the N-terminal domain of the chaperone ClpA.

Its function is as follows. Involved in the modulation of the specificity of the ClpAP-mediated ATP-dependent protein degradation. This is ATP-dependent Clp protease adapter protein ClpS from Paracidovorax citrulli (strain AAC00-1) (Acidovorax citrulli).